Here is a 312-residue protein sequence, read N- to C-terminus: MNPTFQDIILTLQRYWGERGCALLQPYDMEVGAGTSHTATFLRALGPEPWKAAYVQPSRRPKDGRYGENPNRLQHYYQFQVVLKPAPADILELYLGSLEALGFDLRKNDVRFVEDDWENPTLGAWGLGWEVWLNGMEVTQFTYFQQVGGIDCKPITGEITYGLERLAMYLQGVESVFDLRWTDGLTYRDVYHQNEVEQSAYNFEHSDVGFLLTAFSAHEKKAQELMVAQLALPAYEQVLKAAHTFNLLDARGAISVTERAAYIGRIRNLARSVAKSYLDSRARLGFPMAPRAWADEVLANIEKQTQKKAAAA.

It belongs to the class-II aminoacyl-tRNA synthetase family. As to quaternary structure, tetramer of two alpha and two beta subunits.

The protein localises to the cytoplasm. The catalysed reaction is tRNA(Gly) + glycine + ATP = glycyl-tRNA(Gly) + AMP + diphosphate. In Thiobacillus denitrificans (strain ATCC 25259 / T1), this protein is Glycine--tRNA ligase alpha subunit.